A 101-amino-acid chain; its full sequence is Ubiquitin-like protein SMT3 (101 aa).

S2 carries the N-acetylserine modification. Residues S2 and S4 each carry the phosphoserine modification. In terms of domain architecture, Ubiquitin-like spans 22–98 (THINLKVSDG…IEAHREQIGG (77 aa)). G98 participates in a covalent cross-link: Glycyl lysine isopeptide (Gly-Lys) (interchain with K-? in acceptor proteins). The propeptide occupies 99–101 (ATY).

The protein belongs to the ubiquitin family. SUMO subfamily. Activated by a E1 ligase composed of AOS1 and UBA2.

Functionally, not known; suppressor of MIF2 mutations. The chain is Ubiquitin-like protein SMT3 (SMT3) from Saccharomyces cerevisiae (strain ATCC 204508 / S288c) (Baker's yeast).